We begin with the raw amino-acid sequence, 192 residues long: Ribosome maturation factor RimM (192 aa).

The PRC barrel domain occupies 97 to 172 (EDEYYLADLI…VVLADPPALV (76 aa)). The tract at residues 168 to 192 (PPALVGEPEGPESPAEDDDGERHYD) is disordered.

Belongs to the RimM family. Binds ribosomal protein uS19.

Its subcellular location is the cytoplasm. In terms of biological role, an accessory protein needed during the final step in the assembly of 30S ribosomal subunit, possibly for assembly of the head region. Essential for efficient processing of 16S rRNA. May be needed both before and after RbfA during the maturation of 16S rRNA. It has affinity for free ribosomal 30S subunits but not for 70S ribosomes. This chain is Ribosome maturation factor RimM, found in Caulobacter sp. (strain K31).